A 1388-amino-acid chain; its full sequence is Collagen alpha-1(XV) chain (1388 aa).

A signal peptide spans Met1–Thr27. Positions Ala66–Leu249 constitute a Laminin G-like domain. A disordered region spans residues Thr223 to Gln250. The segment at Arg229 to Val555 is nonhelical region 1 (NC1). A compositionally biased stretch (polar residues) spans Ser240–Leu249. O-linked (Xyl...) (chondroitin sulfate) serine glycans are attached at residues Ser243 and Ser247. O-linked (GalNAc...) threonine glycosylation is present at Thr265. The disordered stretch occupies residues Gln266–Thr301. N-linked (GlcNAc...) asparagine glycans are attached at residues Asn306 and Asn324. Ser343 carries O-linked (Xyl...) (chondroitin sulfate) serine glycosylation. Tandem repeats lie at residues Ala358–Leu408, Ala409–Leu459, Thr460–Leu509, and Ala510–Val555. Residues Ala358 to Val555 are 4 X tandem repeats. Residues Thr371–Pro795 form a disordered region. The segment covering Ser379–Glu392 has biased composition (polar residues). Low complexity predominate over residues Ala409 to Ala420. Residues Gly452–Thr472 show a composition bias toward polar residues. Low complexity predominate over residues Ala510–Gly527. Residues Ser528–Thr540 show a composition bias toward pro residues. Positions Gly556–Glu573 are triple-helical region 1 (COL1). A nonhelical region 2 (NC2) region spans residues Leu574 to Arg618. Residues Ser595 to Asp609 are compositionally biased toward gly residues. Collagen-like domains follow at residues Gly619–Glu680 and Lys681–Pro731. Residues Gly619–Gly732 are triple-helical region 2 (COL2). The span at Pro620–Pro630 shows a compositional bias: pro residues. Asn687 carries an N-linked (GlcNAc...) asparagine glycan. Pro residues predominate over residues Val716–Pro731. Residues Cys733–Ile763 are nonhelical region 3 (NC3). Ser745 carries O-linked (Xyl...) (chondroitin sulfate) serine glycosylation. The triple-helical region 3 (COL3) stretch occupies residues Gly764–Ile798. Residues Lys766 to Met780 are compositionally biased toward basic and acidic residues. Residues Lys799 to Val822 form a nonhelical region 4 (NC4) region. N-linked (GlcNAc...) asparagine glycosylation is found at Asn807 and Asn814. The 43-residue stretch at Gly823–Gly865 folds into the Collagen-like 3 domain. Residues Gly823–Ile867 form a triple-helical region 4 (COL4) region. The span at Pro827–Arg840 shows a compositional bias: pro residues. Positions Pro827–Pro864 are disordered. The interval Leu868–Met878 is nonhelical region 5 (NC5). Residues Gly879 to Gly927 form the Collagen-like 4 domain. Residues Gly879–Val949 are triple-helical region 5 (COL5). Residues Ile950–His983 form a nonhelical region 6 (NC6) region. Positions Gly984–Pro1013 are triple-helical region 6 (COL6). 2 disordered regions span residues Glu988–Leu1016 and Glu1029–Asn1133. Residues Leu1014–Lys1027 form a nonhelical region 7 (NC7) region. Residues Gly1028 to Ile1045 form a triple-helical region 7 (COL7) region. The segment covering Glu1029 to Asp1044 has biased composition (basic and acidic residues). N-linked (GlcNAc...) asparagine glycosylation is present at Asn1046. A nonhelical region 8 (NC8) region spans residues Asn1046 to Ser1052. Residues Gly1053–Pro1107 form a triple-helical region 8 (COL8) region. 2 stretches are compositionally biased toward pro residues: residues Gln1075 to Pro1107 and Pro1117 to Pro1126. The segment at Ala1108–Pro1117 is nonhelical region 9 (NC9). The triple-helical region 9 (COL9) stretch occupies residues Gly1118–Arg1132. Residues Asn1133 to Lys1388 are nonhelical region 10 (NC10). Disulfide bonds link Cys1237–Cys1377 and Cys1339–Cys1369.

This sequence belongs to the multiplexin collagen family. As to quaternary structure, trimer; disulfide-linked. Interacts moderately with EFEMP2. Prolines at the third position of the tripeptide repeating unit (G-X-Y) are hydroxylated in some or all of the chains. In terms of processing, O-glycosylated; with core 1 or possibly core 8 glycans. Contains chondroitin sulfate. As to expression, detected in fibroblasts and urine (at protein level). Detected in placenta (at protein level). Expressed predominantly in internal organs such as adrenal gland, pancreas and kidney.

The protein localises to the secreted. Its subcellular location is the extracellular space. The protein resides in the extracellular matrix. In terms of biological role, structural protein that stabilizes microvessels and muscle cells, both in heart and in skeletal muscle. Functionally, restin potently inhibits angiogenesis. This chain is Collagen alpha-1(XV) chain (COL15A1), found in Homo sapiens (Human).